A 221-amino-acid polypeptide reads, in one-letter code: 7-cyano-7-deazaguanine synthase (221 aa).

Position 7–17 (7–17 (LSGGMDSSTLA)) interacts with ATP. 4 residues coordinate Zn(2+): Cys-187, Cys-195, Cys-198, and Cys-201.

This sequence belongs to the QueC family. The cofactor is Zn(2+).

It carries out the reaction 7-carboxy-7-deazaguanine + NH4(+) + ATP = 7-cyano-7-deazaguanine + ADP + phosphate + H2O + H(+). The protein operates within purine metabolism; 7-cyano-7-deazaguanine biosynthesis. Functionally, catalyzes the ATP-dependent conversion of 7-carboxy-7-deazaguanine (CDG) to 7-cyano-7-deazaguanine (preQ(0)). This is 7-cyano-7-deazaguanine synthase from Methanosphaerula palustris (strain ATCC BAA-1556 / DSM 19958 / E1-9c).